Consider the following 203-residue polypeptide: Glutathione S-transferase 2 (203 aa).

A GST N-terminal domain is found at 1-78 (MPKVVFHYFG…YLGRKYGLAG (78 aa)). Glutathione is bound by residues Tyr-8, Trp-38, Lys-42, 48 to 50 (GQM), and 62 to 63 (QS). The GST C-terminal domain maps to 80 to 203 (DIEEDFEIDQ…YLDSAPKKEF (124 aa)).

This sequence belongs to the GST superfamily. Sigma family. In terms of assembly, homodimer.

The catalysed reaction is RX + glutathione = an S-substituted glutathione + a halide anion + H(+). Functionally, conjugation of reduced glutathione to a wide number of exogenous and endogenous hydrophobic electrophiles. The chain is Glutathione S-transferase 2 (GST2) from Manduca sexta (Tobacco hawkmoth).